Here is a 473-residue protein sequence, read N- to C-terminus: Isocitrate dehydrogenase [NADP] (473 aa).

Thr104 provides a ligand contact to NADP(+). D-threo-isocitrate contacts are provided by Ser113, Asn115, Arg119, Arg129, and Arg153. Asp362 serves as a coordination point for Mg(2+). Residues 394 to 400 (HGTAPKH), Asn407, Tyr446, and Arg450 each bind NADP(+).

It belongs to the isocitrate and isopropylmalate dehydrogenases family. In terms of assembly, homodimer. Mg(2+) serves as cofactor. Mn(2+) is required as a cofactor.

It carries out the reaction D-threo-isocitrate + NADP(+) = 2-oxoglutarate + CO2 + NADPH. Its activity is regulated as follows. Inhibited by either oxaloacetate or glyoxylate. Also inhibited by the adenine nucleotides AMP, ADP and ATP and by NADPH, which inhibits the activity by 28% when it is added to the assay mixture at 0.25 mM. Catalyzes the oxidative decarboxylation of isocitrate to 2-oxoglutarate and carbon dioxide with the concomitant reduction of NADP(+). The protein is Isocitrate dehydrogenase [NADP] of Nostoc sp. (strain PCC 7120 / SAG 25.82 / UTEX 2576).